A 444-amino-acid polypeptide reads, in one-letter code: Adenylosuccinate synthetase (444 aa).

Residues Gly-19 to Lys-25 and Gly-47 to Thr-49 each bind GTP. Asp-20 functions as the Proton acceptor in the catalytic mechanism. Mg(2+)-binding residues include Asp-20 and Gly-47. IMP contacts are provided by residues Asp-20 to Lys-23, Asn-45 to His-48, Thr-139, Arg-153, Gln-234, Thr-249, and Arg-317. Residue His-48 is the Proton donor of the active site. Thr-313–Arg-319 contacts substrate. GTP-binding positions include Arg-319, Lys-345 to Asp-347, and Ser-427 to Gly-429.

It belongs to the adenylosuccinate synthetase family. In terms of assembly, homodimer. It depends on Mg(2+) as a cofactor.

The protein resides in the cytoplasm. It carries out the reaction IMP + L-aspartate + GTP = N(6)-(1,2-dicarboxyethyl)-AMP + GDP + phosphate + 2 H(+). It functions in the pathway purine metabolism; AMP biosynthesis via de novo pathway; AMP from IMP: step 1/2. In terms of biological role, plays an important role in the de novo pathway of purine nucleotide biosynthesis. Catalyzes the first committed step in the biosynthesis of AMP from IMP. The chain is Adenylosuccinate synthetase from Methylibium petroleiphilum (strain ATCC BAA-1232 / LMG 22953 / PM1).